The chain runs to 219 residues: Ribose-5-phosphate isomerase A (219 aa).

Substrate is bound by residues 28-31, 81-84, and 94-97; these read SGST, DGAD, and KGGG. Catalysis depends on glutamate 103, which acts as the Proton acceptor. Position 121 (lysine 121) interacts with substrate.

Belongs to the ribose 5-phosphate isomerase family. As to quaternary structure, homodimer.

It carries out the reaction aldehydo-D-ribose 5-phosphate = D-ribulose 5-phosphate. It functions in the pathway carbohydrate degradation; pentose phosphate pathway; D-ribose 5-phosphate from D-ribulose 5-phosphate (non-oxidative stage): step 1/1. Its function is as follows. Catalyzes the reversible conversion of ribose-5-phosphate to ribulose 5-phosphate. In Histophilus somni (strain 2336) (Haemophilus somnus), this protein is Ribose-5-phosphate isomerase A.